The primary structure comprises 313 residues: Sideroflexin-4 (313 aa).

The next 5 membrane-spanning stretches (helical) occupy residues 87 to 107 (AALL…VKSL), 141 to 161 (LLLG…PRLL), 175 to 191 (FIPV…NVIA), 230 to 247 (VVLF…AYFF), and 269 to 289 (VLVM…IGRI).

Belongs to the sideroflexin family.

It is found in the mitochondrion inner membrane. Mitochondrial amino-acid transporter. Does not act as a serine transporter: not able to mediate transport of serine into mitochondria. The chain is Sideroflexin-4 from Bos taurus (Bovine).